A 677-amino-acid chain; its full sequence is Sulfate transporter 2.1 (677 aa).

Residues 1-118 (MKERDSESFE…NYKLTMFKND (118 aa)) are Cytoplasmic-facing. The segment at 23 to 54 (STHMIQMAMANSGSSAAAQAGQDQPDRSKWLL) is disordered. Low complexity predominate over residues 28–44 (QMAMANSGSSAAAQAGQ). A helical membrane pass occupies residues 119-139 (LMAGLTLASLCIPQSIGYATL). The Extracellular segment spans residues 140–141 (AK). A helical transmembrane segment spans residues 142–162 (LDPQYGLYTSVVPPLIYALMG). Residues 163–166 (TSRE) lie on the Cytoplasmic side of the membrane. Residues 167–187 (IAIGPVAVVSLLISSMLQKLI) traverse the membrane as a helical segment. Topologically, residues 188-198 (DPETDPLGYKK) are extracellular. The helical transmembrane segment at 199 to 219 (LVLTTTFFAGIFQASFGLFRL) threads the bilayer. The Cytoplasmic segment spans residues 220–221 (GF). Residues 222 to 242 (LVDFLSHAAIVGFMGGAAIVI) traverse the membrane as a helical segment. Topologically, residues 243–278 (GLQQLKGLLGITNFTTNTDIVSVLRAVWRSCQQQWS) are extracellular. N255 carries N-linked (GlcNAc...) asparagine glycosylation. A helical transmembrane segment spans residues 279 to 299 (PHTFILGCSFLSFILITRFIG). Residues 300 to 304 (KKYKK) lie on the Cytoplasmic side of the membrane. The helical transmembrane segment at 305–325 (LFWLPAIAPLIAVVVSTLMVF) threads the bilayer. Residues 326–360 (LTKADEHGVKTVRHIKGGLNPMSIQDLDFNTPHLG) lie on the Extracellular side of the membrane. A helical transmembrane segment spans residues 361–381 (QIAKIGLIIAIVALTEAIAVG). Residues 382–397 (RSFAGIKGYRLDGNKE) lie on the Cytoplasmic side of the membrane. The helical transmembrane segment at 398–418 (MVAIGFMNVLGSFTSCYAATG) threads the bilayer. Residues 419–426 (SFSRTAVN) are Extracellular-facing. Residues 427-447 (FAAGCETAMSNIVMAVTVFVA) form a helical membrane-spanning segment. Residues 448–454 (LECLTRL) are Cytoplasmic-facing. Residues 455-475 (LYYTPIAILASIILSALPGLI) form a helical membrane-spanning segment. At 476–490 (NINEAIHIWKVDKFD) the chain is on the extracellular side. A helical transmembrane segment spans residues 491–511 (FLALIGAFFGVLFASVEIGLL). Residues 512–677 (VAVVISFAKI…ALDACFGLKV (166 aa)) lie on the Cytoplasmic side of the membrane. The STAS domain occupies 548 to 672 (YPMTVKTPGV…LTIGEALDAC (125 aa)).

It belongs to the SLC26A/SulP transporter (TC 2.A.53) family. As to expression, expressed in root cap, central cylinder of roots and in vascular tissues of leaves.

The protein localises to the membrane. Functionally, low-affinity H(+)/sulfate cotransporter that may be involved in root-to-shoot translocation of sulfate. Plays a central role in the regulation of sulfate assimilation. The chain is Sulfate transporter 2.1 (SULTR2;1) from Arabidopsis thaliana (Mouse-ear cress).